Reading from the N-terminus, the 435-residue chain is 5-methylthioadenosine/S-adenosylhomocysteine deaminase (435 aa).

Zn(2+) contacts are provided by His65 and His67. The substrate site is built by Glu94, Arg150, and His189. Residue His216 coordinates Zn(2+). Residues Glu219 and Asp304 each coordinate substrate. A Zn(2+)-binding site is contributed by Asp304.

The protein belongs to the metallo-dependent hydrolases superfamily. MTA/SAH deaminase family. Requires Zn(2+) as cofactor.

It carries out the reaction S-adenosyl-L-homocysteine + H2O + H(+) = S-inosyl-L-homocysteine + NH4(+). The catalysed reaction is S-methyl-5'-thioadenosine + H2O + H(+) = S-methyl-5'-thioinosine + NH4(+). Its function is as follows. Catalyzes the deamination of 5-methylthioadenosine and S-adenosyl-L-homocysteine into 5-methylthioinosine and S-inosyl-L-homocysteine, respectively. Is also able to deaminate adenosine. This is 5-methylthioadenosine/S-adenosylhomocysteine deaminase from Bacillus cereus (strain ATCC 10987 / NRS 248).